Here is a 377-residue protein sequence, read N- to C-terminus: Prostaglandin E synthase 2 (377 aa).

Over 1-65 the chain is Lumenal; that stretch reads MAAACTRTLG…LAAPVRGSGR (65 aa). Residues 66–83 form a helical membrane-spanning segment; that stretch reads VLGCAFLLGGGFGLYQTI. Residues 105–182 enclose the GST N-terminal domain; sequence LKLTLYQYKT…ALKTYISSKD (78 aa). Residues valine 153 and 166 to 167 contribute to the glutathione site; that span reads DS. In terms of domain architecture, GST C-terminal spans 266-377; it reads YIVREGKFGS…RMQKATQHVS (112 aa).

It belongs to the GST superfamily. Homodimer.

It localises to the golgi apparatus membrane. The catalysed reaction is prostaglandin H2 = prostaglandin E2. It carries out the reaction prostaglandin H2 = (12S)-hydroxy-(5Z,8E,10E)-heptadecatrienoate + malonaldehyde. The protein operates within lipid metabolism; prostaglandin biosynthesis. Isomerase activity is increased by sulfhydril compounds. Dithiothreitol (DTT) is most effective, followed by glutathione (GSH) and 2-mercaptoethanol. Functionally, isomerase that catalyzes the conversion of PGH2 into the more stable prostaglandin E2 (PGE2) (in vitro). The biological function and the GSH-dependent property of PTGES2 is still under debate. In vivo, PTGES2 could form a complex with GSH and heme and would not participate in PGE2 synthesis but would catalyze the degradation of prostaglandin E2 H2 (PGH2) to 12(S)-hydroxy-5(Z),8(E),10(E)-heptadecatrienoic acid (HHT) and malondialdehyde (MDA). The sequence is that of Prostaglandin E synthase 2 (ptges2) from Danio rerio (Zebrafish).